Consider the following 253-residue polypeptide: uncharacterized protein (253 aa).

This is an uncharacterized protein from Ostreid herpesvirus 1 (isolate France) (OsHV-1).